The primary structure comprises 140 residues: Dehydratase ustZ (140 aa).

The EthD domain occupies 18 to 113 (PGISTEDYRN…GPDHEKFADT (96 aa)).

This sequence belongs to the tpcK family.

The enzyme catalyses naphtopyrone YWA1 = norrubrofusarin + H2O + H(+). Its pathway is secondary metabolite biosynthesis. Its function is as follows. Dehydratase; part of the gene cluster that mediates the biosynthesis of ustilaginoidins, dimeric gamma-naphthopyrones isolated from different fungal species. The first step in the biosynthesis of ustilaginoidins is the production of gamma-naphthopyrone precursor YWA1 by the non-reducing polyketide synthase ustP, via condensation of one acetyl-CoA starter unit with 6 malonyl-CoA units. YWA1 is then probably substrate of the ustZ to yield norrubrofusarin via a dehydration reaction. A key enzyme in the biosynthetic pathway is the laccase ustL, which catalyzes the oxidative dimerization of norrubrofusarin to ustilaginoidin A. It can produce the M- and P-atropisomers in varying amounts, depending on the reaction conditions. For the biosynthesis of 3-methylustilaginoid in derivatives such as chaetochromin A, a methylated derivative of YWA1 is required. The C-methylation is considered to be catalyzed by ustM, the phosphopantetheine attachment site of which indicates that it acts on the growing polyketide chain before release of the product. For the biosynthesis of chaetochromin A, it is assumed that saturation of the D2 double bond takes place before dimerization, and is probably catalyzed by an external reductase because no candidate gene was identified within the cluster. The protein is Dehydratase ustZ of Ustilaginoidea virens (Rice false smut fungus).